Here is a 293-residue protein sequence, read N- to C-terminus: NAD kinase (293 aa).

The active-site Proton acceptor is the D73. Residues 73–74 (DG), 147–148 (NE), H158, R175, D177, 188–193 (TAYSLS), and Q248 each bind NAD(+).

It belongs to the NAD kinase family. The cofactor is a divalent metal cation.

The protein localises to the cytoplasm. The enzyme catalyses NAD(+) + ATP = ADP + NADP(+) + H(+). Its function is as follows. Involved in the regulation of the intracellular balance of NAD and NADP, and is a key enzyme in the biosynthesis of NADP. Catalyzes specifically the phosphorylation on 2'-hydroxyl of the adenosine moiety of NAD to yield NADP. In Photobacterium profundum (strain SS9), this protein is NAD kinase.